The chain runs to 303 residues: UDP-3-O-acyl-N-acetylglucosamine deacetylase (303 aa).

Residues His78, His237, and Asp241 each coordinate Zn(2+). His264 functions as the Proton donor in the catalytic mechanism.

Belongs to the LpxC family. Requires Zn(2+) as cofactor.

It catalyses the reaction a UDP-3-O-[(3R)-3-hydroxyacyl]-N-acetyl-alpha-D-glucosamine + H2O = a UDP-3-O-[(3R)-3-hydroxyacyl]-alpha-D-glucosamine + acetate. It functions in the pathway glycolipid biosynthesis; lipid IV(A) biosynthesis; lipid IV(A) from (3R)-3-hydroxytetradecanoyl-[acyl-carrier-protein] and UDP-N-acetyl-alpha-D-glucosamine: step 2/6. In terms of biological role, catalyzes the hydrolysis of UDP-3-O-myristoyl-N-acetylglucosamine to form UDP-3-O-myristoylglucosamine and acetate, the committed step in lipid A biosynthesis. This Saccharophagus degradans (strain 2-40 / ATCC 43961 / DSM 17024) protein is UDP-3-O-acyl-N-acetylglucosamine deacetylase.